A 168-amino-acid polypeptide reads, in one-letter code: WAP four-disulfide core domain protein 2 (168 aa).

A signal peptide spans 1–30 (MPACRLCLLATGLLLGLLLFTPLSATGTRA). 2 WAP domains span residues 31–74 (EKPG…SKPN) and 119–167 (NGEK…TTPK). Cystine bridges form between Cys-36-Cys-62, Cys-45-Cys-66, Cys-49-Cys-61, and Cys-55-Cys-70. Residues 100–123 (PLSRGQVSTKPPVVTKEGGNGEKQ) form a disordered region. Cystine bridges form between Cys-126-Cys-154, Cys-137-Cys-158, Cys-141-Cys-153, and Cys-147-Cys-163.

As to quaternary structure, homotrimer; disulfide-linked.

Its subcellular location is the secreted. Its function is as follows. Broad range protease inhibitor. In Rattus norvegicus (Rat), this protein is WAP four-disulfide core domain protein 2 (Wfdc2).